Here is a 427-residue protein sequence, read N- to C-terminus: Piwi protein (427 aa).

The tract at residues 38–167 (PYEVPSLKYN…VQFVSKLGGK (130 aa)) is mid domain. In terms of domain architecture, Piwi spans 110 to 406 (GIMLVLPEYN…VAGIIANVNR (297 aa)). Residues 118–124 (YNTPLYY) are binds 5'-phosphorylated end of guide DNA. The interval 147-148 (RN) is binds target DNA. Residues 150–155 (TFYVDN) are binds guide DNA. A divalent metal cation contacts are provided by Gln159 and Leu427. The PIWI domain stretch occupies residues 168–427 (PWILNVDPEK…RSLQTNPWFL (260 aa)).

It belongs to the argonaute family. Short pAgo subfamily. Homodimer probably stabilized by DNA. Each subunit is capable of interacting with a DNA molecule. It depends on a divalent metal cation as a cofactor.

Functionally, might play a role in defense against invading genetic elements, using short nucleic acid sequences as guides to bind complementary target strands, resulting in slicing of the target nucleic acid. Binds nucleic acids with decreasing affinity in the following order; ssDNA, ssRNA, dsDNA, RNA-DNA, RNA-RNA. Association of the 5' seed region of the guide strand (nucleotides 2-7) with AfPiwi increases affinity for the corresponding target strand; the greatest increase in affinity is for guide DNA with target RNA. In Archaeoglobus fulgidus (strain ATCC 49558 / DSM 4304 / JCM 9628 / NBRC 100126 / VC-16), this protein is Piwi protein.